The following is an 817-amino-acid chain: Lon protease (817 aa).

Residues 22-216 form the Lon N-terminal domain; it reads VPIMPLSDGV…KVTRQLNHQL (195 aa). 368–375 contacts ATP; it reads GPPGTGKT. One can recognise a Lon proteolytic domain in the interval 604–785; that stretch reads ALTPGVVMGL…GDVLELALNG (182 aa). Residues Ser-691 and Lys-734 contribute to the active site. The disordered stretch occupies residues 784-817; that stretch reads NGNGATKKKKKTPAKSKKSTKPAAKKTAARKSRK. A compositionally biased stretch (basic residues) spans 789 to 817; sequence TKKKKKTPAKSKKSTKPAAKKTAARKSRK.

This sequence belongs to the peptidase S16 family. In terms of assembly, homohexamer. Organized in a ring with a central cavity.

It localises to the cytoplasm. It catalyses the reaction Hydrolysis of proteins in presence of ATP.. In terms of biological role, ATP-dependent serine protease that mediates the selective degradation of mutant and abnormal proteins as well as certain short-lived regulatory proteins. Required for cellular homeostasis and for survival from DNA damage and developmental changes induced by stress. Degrades polypeptides processively to yield small peptide fragments that are 5 to 10 amino acids long. Binds to DNA in a double-stranded, site-specific manner. The chain is Lon protease from Desulfosudis oleivorans (strain DSM 6200 / JCM 39069 / Hxd3) (Desulfococcus oleovorans).